The chain runs to 497 residues: MSFLLALDQGTSSSRSIVFDIEGRPVAMAQRELRQIYPQPGWVEHDPIEIRDSQLATAREAIARAGISAHDIRAVGITNQRETTLLWNRRTGAPLHNAIVWQDRRTEPICAALRERGAEALVRQRTGLLIDPYFSGTKLQWLLDHVPGAREQAARGELAFGTVDAWLVWQLTGGRVHATDVTNASRTLLFDVHANRWDDELLSLLDVPHELLPAVFPSSHLYGETDAGLLGAALPIAGIAGDQQSALFGQACFKPGLAKNTYGTGCFLLMHNGDRFQSSANGLVTTAAAQTGPQPQFAIEGSVFVGGAVVQWLRDGLRAIDSASAVQALAQSVPDSGGVVFVPAFTGLGAPYWKPDARGAIVGLSRGTTLGHIARAALESIAYQSAALLAAMGRDAQACGGAAVTELRVDGGACVNDLLMQFQADLLGVPVVRPQVIETTARGAAFLAGLSTGVYRGLDELEALWQPERTFHPTLPPGRASELMAQWEHAVRQTVAS.

Residue threonine 11 participates in ADP binding. ATP is bound by residues threonine 11, serine 12, and serine 13. Threonine 11 serves as a coordination point for sn-glycerol 3-phosphate. Arginine 15 is an ADP binding site. Arginine 81, glutamate 82, tyrosine 133, and aspartate 242 together coordinate sn-glycerol 3-phosphate. Glycerol is bound by residues arginine 81, glutamate 82, tyrosine 133, aspartate 242, and glutamine 243. Positions 264 and 307 each coordinate ADP. The ATP site is built by threonine 264, glycine 307, glutamine 311, and glycine 412. Positions 412 and 416 each coordinate ADP.

This sequence belongs to the FGGY kinase family.

The catalysed reaction is glycerol + ATP = sn-glycerol 3-phosphate + ADP + H(+). It functions in the pathway polyol metabolism; glycerol degradation via glycerol kinase pathway; sn-glycerol 3-phosphate from glycerol: step 1/1. Inhibited by fructose 1,6-bisphosphate (FBP). Key enzyme in the regulation of glycerol uptake and metabolism. Catalyzes the phosphorylation of glycerol to yield sn-glycerol 3-phosphate. The polypeptide is Glycerol kinase (Leptothrix cholodnii (strain ATCC 51168 / LMG 8142 / SP-6) (Leptothrix discophora (strain SP-6))).